The sequence spans 430 residues: Gamma-glutamyl phosphate reductase (430 aa).

This sequence belongs to the gamma-glutamyl phosphate reductase family.

The protein localises to the cytoplasm. The catalysed reaction is L-glutamate 5-semialdehyde + phosphate + NADP(+) = L-glutamyl 5-phosphate + NADPH + H(+). It participates in amino-acid biosynthesis; L-proline biosynthesis; L-glutamate 5-semialdehyde from L-glutamate: step 2/2. In terms of biological role, catalyzes the NADPH-dependent reduction of L-glutamate 5-phosphate into L-glutamate 5-semialdehyde and phosphate. The product spontaneously undergoes cyclization to form 1-pyrroline-5-carboxylate. The protein is Gamma-glutamyl phosphate reductase of Rhodopseudomonas palustris (strain TIE-1).